The sequence spans 582 residues: 5-aminolevulinate synthase, erythroid-specific, mitochondrial (582 aa).

Succinyl-CoA is bound at residue Arg158. Residues Cys253 and Phe254 each coordinate pyridoxal 5'-phosphate. Ser275 and Arg294 together coordinate succinyl-CoA. The pyridoxal 5'-phosphate site is built by Ser327, His355, and Thr383. Residue Lys386 is part of the active site. Lys386 carries the post-translational modification N6-(pyridoxal phosphate)lysine. 2 residues coordinate pyridoxal 5'-phosphate: Thr415 and Thr416. Position 503 (Thr503) interacts with succinyl-CoA.

This sequence belongs to the class-II pyridoxal-phosphate-dependent aminotransferase family. In terms of assembly, homodimer. Pyridoxal 5'-phosphate serves as cofactor.

The protein resides in the mitochondrion inner membrane. It catalyses the reaction succinyl-CoA + glycine + H(+) = 5-aminolevulinate + CO2 + CoA. It functions in the pathway porphyrin-containing compound metabolism; protoporphyrin-IX biosynthesis; 5-aminolevulinate from glycine: step 1/1. Catalyzes the pyridoxal 5'-phosphate (PLP)-dependent condensation of succinyl-CoA and glycine to form aminolevulinic acid (ALA), with CoA and CO2 as by-products. Contributes significantly to heme formation during erythropoiesis. This Opsanus tau (Oyster toadfish) protein is 5-aminolevulinate synthase, erythroid-specific, mitochondrial (alas2).